Reading from the N-terminus, the 361-residue chain is Heme A synthase (361 aa).

Transmembrane regions (helical) follow at residues 22-42 (LWVR…VLVG), 109-129 (LLAR…WVTG), 139-159 (LLGI…MVAS), 175-195 (HLTI…GLAP), 208-228 (FAFW…LVAG), 269-289 (FVHR…AIAT), 303-323 (VLLF…LLMV), and 324-344 (VPMD…GFAT). H271 is a heme binding site. H332 contacts heme.

The protein belongs to the COX15/CtaA family. Type 2 subfamily. As to quaternary structure, interacts with CtaB. Heme b is required as a cofactor.

Its subcellular location is the cell membrane. It catalyses the reaction Fe(II)-heme o + 2 A + H2O = Fe(II)-heme a + 2 AH2. Its pathway is porphyrin-containing compound metabolism; heme A biosynthesis; heme A from heme O: step 1/1. In terms of biological role, catalyzes the conversion of heme O to heme A by two successive hydroxylations of the methyl group at C8. The first hydroxylation forms heme I, the second hydroxylation results in an unstable dihydroxymethyl group, which spontaneously dehydrates, resulting in the formyl group of heme A. The sequence is that of Heme A synthase from Chelativorans sp. (strain BNC1).